Reading from the N-terminus, the 412-residue chain is Clamp protein VP6 (412 aa).

This sequence belongs to the reoviridae clamp protein family. Interacts with capsid proteins VP3, VP5 and VP7.

It is found in the virion. Located at the interface of the incomplete T=13 outer capsid and the pseudo T=2 inner capsid, 120 VP6 subunits clamp and stabilizes the inner capsid shell. The protein is Clamp protein VP6 (S8) of Aquareovirus C (isolate Golden shiner/USA/GSRV/1977) (AQRV-C).